The chain runs to 380 residues: Putative RNA ligase (380 aa).

Its function is as follows. Putative RNA ligase. Is able to catalyze the adenylation reaction of ssDNA 3'-terminal phosphate (ssDNA 3'p) to 3'-adenylated DNA (ssDNA 3'pp5'A). This is Putative RNA ligase from Thermovibrio ammonificans (strain DSM 15698 / JCM 12110 / HB-1).